A 258-amino-acid chain; its full sequence is Phosphonates import ATP-binding protein PhnC 1 (258 aa).

The ABC transporter domain occupies 2-246 (IEFKDVGLVY…TFEEIYGRSI (245 aa)). Position 35–42 (35–42 (GLSGAGKS)) interacts with ATP.

It belongs to the ABC transporter superfamily. Phosphonates importer (TC 3.A.1.9.1) family. In terms of assembly, the complex is composed of two ATP-binding proteins (PhnC), two transmembrane proteins (PhnE) and a solute-binding protein (PhnD).

The protein localises to the cell membrane. It carries out the reaction phosphonate(out) + ATP + H2O = phosphonate(in) + ADP + phosphate + H(+). Part of the ABC transporter complex PhnCDE involved in phosphonates import. Responsible for energy coupling to the transport system. This chain is Phosphonates import ATP-binding protein PhnC 1, found in Oceanobacillus iheyensis (strain DSM 14371 / CIP 107618 / JCM 11309 / KCTC 3954 / HTE831).